Here is a 520-residue protein sequence, read N- to C-terminus: Cytochrome P450 monooxygenase btcC (520 aa).

The helical transmembrane segment at 2-22 (IFLLTLAGLKVLSIVILFGII) threads the bilayer. A glycan (N-linked (GlcNAc...) asparagine) is linked at Asn-177. Cys-448 contacts heme. N-linked (GlcNAc...) asparagine glycosylation is present at Asn-511.

This sequence belongs to the cytochrome P450 family. Heme serves as cofactor.

The protein localises to the membrane. It functions in the pathway secondary metabolite biosynthesis; terpenoid biosynthesis. Its function is as follows. Cytochrome P4590 monooxygenase part of the gene cluster that mediates the biosynthesis of betaestacins. The bifunctional terpene synthase btcA converts isopentenyl diphosphate (IPP) and dimethylallyl diphosphate (DMAPP) into the sesterterpene betaestacin I. The C-terminal prenyltransferase (PT) domain of btcA catalyzes formation of GFPP, whereas the N-terminal terpene cyclase (TC) domain catalyzes the cyclization of GFPP into betaestacin I. The cytochrome P450 monooxygenase btcB oxidizes the C25 methyl group of betaestacin I to yield the carboxylic acid betaestacin IV via the alcohol betaestacin III. The cytochrome P450 monooxygenase btcC further catalyzes the multistep oxidation of betaestacin IV to produce several compounds, including betaestacins Va, Vb, Vc and VI. The sequence is that of Cytochrome P450 monooxygenase btcC from Colletotrichum orbiculare (strain 104-T / ATCC 96160 / CBS 514.97 / LARS 414 / MAFF 240422) (Cucumber anthracnose fungus).